A 443-amino-acid polypeptide reads, in one-letter code: Eukaryotic translation initiation factor 3 subunit E (443 aa).

The PCI domain occupies 249–417 (LDLFFNAGFI…GTVVMNHPPS (169 aa)).

The protein belongs to the eIF-3 subunit E family. In terms of assembly, component of the eukaryotic translation initiation factor 3 (eIF-3) complex.

It is found in the cytoplasm. In terms of biological role, component of the eukaryotic translation initiation factor 3 (eIF-3) complex, which is involved in protein synthesis of a specialized repertoire of mRNAs and, together with other initiation factors, stimulates binding of mRNA and methionyl-tRNAi to the 40S ribosome. The eIF-3 complex specifically targets and initiates translation of a subset of mRNAs involved in cell proliferation. This Neurospora crassa (strain ATCC 24698 / 74-OR23-1A / CBS 708.71 / DSM 1257 / FGSC 987) protein is Eukaryotic translation initiation factor 3 subunit E (int-6).